The chain runs to 338 residues: Fructose-1,6-bisphosphatase class 1 1 (338 aa).

4 residues coordinate Mg(2+): Glu91, Asp113, Leu115, and Asp116. Substrate-binding positions include 116–119, Asn208, and Lys274; that span reads DGSS. Glu280 is a binding site for Mg(2+).

This sequence belongs to the FBPase class 1 family. As to quaternary structure, homotetramer. The cofactor is Mg(2+).

The protein localises to the cytoplasm. The catalysed reaction is beta-D-fructose 1,6-bisphosphate + H2O = beta-D-fructose 6-phosphate + phosphate. It participates in carbohydrate biosynthesis; gluconeogenesis. This chain is Fructose-1,6-bisphosphatase class 1 1, found in Cupriavidus metallidurans (strain ATCC 43123 / DSM 2839 / NBRC 102507 / CH34) (Ralstonia metallidurans).